A 457-amino-acid polypeptide reads, in one-letter code: Heme sensor protein HssS (457 aa).

The next 2 helical transmembrane spans lie at 9–29 and 164–184; these read IAIY…VLTN and TFLA…VIAS. The 53-residue stretch at 186 to 238 folds into the HAMP domain; sequence YSIIRPVKKLKLATERLIDGDFETPIKQTRKDEIGTLQYHFNKMRESLGQVDQ. The region spanning 246-456 is the Histidine kinase domain; sequence NVSHEIKTPL…TFTITLPNNS (211 aa). His-249 carries the phosphohistidine; by autocatalysis modification.

Post-translationally, autophosphorylated.

It is found in the cell membrane. The catalysed reaction is ATP + protein L-histidine = ADP + protein N-phospho-L-histidine.. Functionally, member of the two-component regulatory system HssS/HssR involved in intracellular heme homeostasis and tempering of staphylococcal virulence. HssS functions as a heme sensor histidine kinase which is autophosphorylated at a histidine residue and transfers its phosphate group to an aspartate residue of HssR. HssR/HssS activates the expression of hrtAB, an efflux pump, in response to extracellular heme, hemin, hemoglobin or blood. In Staphylococcus aureus (strain MSSA476), this protein is Heme sensor protein HssS (hssS).